The chain runs to 176 residues: Immunity factor for TNT homolog (176 aa).

Interacts with the tuberculosis necrotizing toxin (TNT) homolog, the C-terminal domain of the outer membrane channel protein CpnT.

Its function is as follows. Antitoxin for tuberculosis necrotizing toxin (TNT) homolog. Acts by binding directly to TNT, which inhibits NAD(+) glycohydrolase activity of TNT and protects M.bovis from self-poisoning. The chain is Immunity factor for TNT homolog from Mycobacterium bovis (strain BCG / Pasteur 1173P2).